A 179-amino-acid polypeptide reads, in one-letter code: ATP synthase subunit b (179 aa).

A helical membrane pass occupies residues 26-46 (FLEANLFNLAILLGIIIYYAP).

It belongs to the ATPase B chain family. In terms of assembly, F-type ATPases have 2 components, F(1) - the catalytic core - and F(0) - the membrane proton channel. F(1) has five subunits: alpha(3), beta(3), gamma(1), delta(1), epsilon(1). F(0) has four main subunits: a(1), b(1), b'(1) and c(10-14). The alpha and beta chains form an alternating ring which encloses part of the gamma chain. F(1) is attached to F(0) by a central stalk formed by the gamma and epsilon chains, while a peripheral stalk is formed by the delta, b and b' chains.

The protein localises to the cellular thylakoid membrane. F(1)F(0) ATP synthase produces ATP from ADP in the presence of a proton or sodium gradient. F-type ATPases consist of two structural domains, F(1) containing the extramembraneous catalytic core and F(0) containing the membrane proton channel, linked together by a central stalk and a peripheral stalk. During catalysis, ATP synthesis in the catalytic domain of F(1) is coupled via a rotary mechanism of the central stalk subunits to proton translocation. Functionally, component of the F(0) channel, it forms part of the peripheral stalk, linking F(1) to F(0). In Synechocystis sp. (strain ATCC 27184 / PCC 6803 / Kazusa), this protein is ATP synthase subunit b.